A 227-amino-acid polypeptide reads, in one-letter code: Cytochrome c oxidase subunit 2 (227 aa).

Residues 1–14 (MAHPVQLGLQDATS) lie on the Mitochondrial intermembrane side of the membrane. A helical membrane pass occupies residues 15–45 (PVMEELITFHDQALMAMFLISFLILYALSST). The Mitochondrial matrix segment spans residues 46-59 (LTTKLTNTNITDAQ). The helical transmembrane segment at 60 to 87 (EMETIWTILPAVILILIALPSLRILYMT) threads the bilayer. Over 88–227 (DEINNPSFTI…IFEMGPVFTL (140 aa)) the chain is Mitochondrial intermembrane. Positions 161, 196, 198, 200, 204, and 207 each coordinate Cu cation. Glu-198 contributes to the Mg(2+) binding site.

This sequence belongs to the cytochrome c oxidase subunit 2 family. As to quaternary structure, component of the cytochrome c oxidase (complex IV, CIV), a multisubunit enzyme composed of 14 subunits. The complex is composed of a catalytic core of 3 subunits MT-CO1, MT-CO2 and MT-CO3, encoded in the mitochondrial DNA, and 11 supernumerary subunits COX4I, COX5A, COX5B, COX6A, COX6B, COX6C, COX7A, COX7B, COX7C, COX8 and NDUFA4, which are encoded in the nuclear genome. The complex exists as a monomer or a dimer and forms supercomplexes (SCs) in the inner mitochondrial membrane with NADH-ubiquinone oxidoreductase (complex I, CI) and ubiquinol-cytochrome c oxidoreductase (cytochrome b-c1 complex, complex III, CIII), resulting in different assemblies (supercomplex SCI(1)III(2)IV(1) and megacomplex MCI(2)III(2)IV(2)). Found in a complex with TMEM177, COA6, COX18, COX20, SCO1 and SCO2. Interacts with TMEM177 in a COX20-dependent manner. Interacts with COX20. Interacts with COX16. Cu cation is required as a cofactor.

The protein localises to the mitochondrion inner membrane. It carries out the reaction 4 Fe(II)-[cytochrome c] + O2 + 8 H(+)(in) = 4 Fe(III)-[cytochrome c] + 2 H2O + 4 H(+)(out). Functionally, component of the cytochrome c oxidase, the last enzyme in the mitochondrial electron transport chain which drives oxidative phosphorylation. The respiratory chain contains 3 multisubunit complexes succinate dehydrogenase (complex II, CII), ubiquinol-cytochrome c oxidoreductase (cytochrome b-c1 complex, complex III, CIII) and cytochrome c oxidase (complex IV, CIV), that cooperate to transfer electrons derived from NADH and succinate to molecular oxygen, creating an electrochemical gradient over the inner membrane that drives transmembrane transport and the ATP synthase. Cytochrome c oxidase is the component of the respiratory chain that catalyzes the reduction of oxygen to water. Electrons originating from reduced cytochrome c in the intermembrane space (IMS) are transferred via the dinuclear copper A center (CU(A)) of subunit 2 and heme A of subunit 1 to the active site in subunit 1, a binuclear center (BNC) formed by heme A3 and copper B (CU(B)). The BNC reduces molecular oxygen to 2 water molecules using 4 electrons from cytochrome c in the IMS and 4 protons from the mitochondrial matrix. The chain is Cytochrome c oxidase subunit 2 (MT-CO2) from Papio anubis (Olive baboon).